The sequence spans 91 residues: Large ribosomal subunit protein eL31 (91 aa).

This sequence belongs to the eukaryotic ribosomal protein eL31 family.

This Pyrobaculum calidifontis (strain DSM 21063 / JCM 11548 / VA1) protein is Large ribosomal subunit protein eL31.